The primary structure comprises 306 residues: Methionyl-tRNA formyltransferase (306 aa).

110-113 (SLLP) provides a ligand contact to (6S)-5,6,7,8-tetrahydrofolate.

The protein belongs to the Fmt family.

It catalyses the reaction L-methionyl-tRNA(fMet) + (6R)-10-formyltetrahydrofolate = N-formyl-L-methionyl-tRNA(fMet) + (6S)-5,6,7,8-tetrahydrofolate + H(+). Its function is as follows. Attaches a formyl group to the free amino group of methionyl-tRNA(fMet). The formyl group appears to play a dual role in the initiator identity of N-formylmethionyl-tRNA by promoting its recognition by IF2 and preventing the misappropriation of this tRNA by the elongation apparatus. This chain is Methionyl-tRNA formyltransferase, found in Brucella ovis (strain ATCC 25840 / 63/290 / NCTC 10512).